A 495-amino-acid chain; its full sequence is ATP synthase subunit beta, chloroplastic (495 aa).

172 to 179 (GGAGVGKT) contributes to the ATP binding site.

The protein belongs to the ATPase alpha/beta chains family. As to quaternary structure, F-type ATPases have 2 components, CF(1) - the catalytic core - and CF(0) - the membrane proton channel. CF(1) has five subunits: alpha(3), beta(3), gamma(1), delta(1), epsilon(1). CF(0) has four main subunits: a(1), b(1), b'(1) and c(9-12).

The protein resides in the plastid. Its subcellular location is the chloroplast thylakoid membrane. It carries out the reaction ATP + H2O + 4 H(+)(in) = ADP + phosphate + 5 H(+)(out). In terms of biological role, produces ATP from ADP in the presence of a proton gradient across the membrane. The catalytic sites are hosted primarily by the beta subunits. The protein is ATP synthase subunit beta, chloroplastic of Convallaria majalis (Lily of the valley).